Consider the following 235-residue polypeptide: Large ribosomal subunit protein uL1 (235 aa).

This sequence belongs to the universal ribosomal protein uL1 family. In terms of assembly, part of the 50S ribosomal subunit.

Functionally, binds directly to 23S rRNA. The L1 stalk is quite mobile in the ribosome, and is involved in E site tRNA release. Protein L1 is also a translational repressor protein, it controls the translation of the L11 operon by binding to its mRNA. The chain is Large ribosomal subunit protein uL1 from Methylobacterium sp. (strain 4-46).